The following is a 386-amino-acid chain: Glucose-1-phosphate adenylyltransferase (386 aa).

Alpha-D-glucose 1-phosphate-binding positions include Tyr100, Gly165, Glu180 to Lys181, and Ser191.

This sequence belongs to the bacterial/plant glucose-1-phosphate adenylyltransferase family. As to quaternary structure, homotetramer.

It carries out the reaction alpha-D-glucose 1-phosphate + ATP + H(+) = ADP-alpha-D-glucose + diphosphate. It functions in the pathway glycan biosynthesis; glycogen biosynthesis. In terms of biological role, involved in the biosynthesis of ADP-glucose, a building block required for the elongation reactions to produce glycogen. Catalyzes the reaction between ATP and alpha-D-glucose 1-phosphate (G1P) to produce pyrophosphate and ADP-Glc. The polypeptide is Glucose-1-phosphate adenylyltransferase (Clostridium botulinum (strain Alaska E43 / Type E3)).